We begin with the raw amino-acid sequence, 78 residues long: Large ribosomal subunit protein uL29 (78 aa).

This sequence belongs to the universal ribosomal protein uL29 family.

The protein is Large ribosomal subunit protein uL29 of Crocosphaera subtropica (strain ATCC 51142 / BH68) (Cyanothece sp. (strain ATCC 51142)).